A 238-amino-acid chain; its full sequence is Ribonuclease PH (238 aa).

Phosphate-binding positions include Arg86 and 124 to 126 (GTR).

The protein belongs to the RNase PH family. In terms of assembly, homohexameric ring arranged as a trimer of dimers.

It carries out the reaction tRNA(n+1) + phosphate = tRNA(n) + a ribonucleoside 5'-diphosphate. Its function is as follows. Phosphorolytic 3'-5' exoribonuclease that plays an important role in tRNA 3'-end maturation. Removes nucleotide residues following the 3'-CCA terminus of tRNAs; can also add nucleotides to the ends of RNA molecules by using nucleoside diphosphates as substrates, but this may not be physiologically important. Probably plays a role in initiation of 16S rRNA degradation (leading to ribosome degradation) during starvation. In Brucella abortus (strain S19), this protein is Ribonuclease PH.